The sequence spans 178 residues: NAD(P)H-quinone oxidoreductase subunit 6, chloroplastic (178 aa).

Helical transmembrane passes span 10–30 (FILVFLGSGLILGGLGVVLFT), 32–52 (PIYSAFSLGLVLVCISLFYIL), 61–81 (AQLLIYVGAVNVLIIFAVMFM), 94–114 (LWTIGDGLTSLVCTSIFFSLI), and 154–174 (FFLPFELVSIILLVALIGAIA).

The protein belongs to the complex I subunit 6 family. As to quaternary structure, NDH is composed of at least 16 different subunits, 5 of which are encoded in the nucleus.

Its subcellular location is the plastid. It localises to the chloroplast thylakoid membrane. It catalyses the reaction a plastoquinone + NADH + (n+1) H(+)(in) = a plastoquinol + NAD(+) + n H(+)(out). The enzyme catalyses a plastoquinone + NADPH + (n+1) H(+)(in) = a plastoquinol + NADP(+) + n H(+)(out). Functionally, NDH shuttles electrons from NAD(P)H:plastoquinone, via FMN and iron-sulfur (Fe-S) centers, to quinones in the photosynthetic chain and possibly in a chloroplast respiratory chain. The immediate electron acceptor for the enzyme in this species is believed to be plastoquinone. Couples the redox reaction to proton translocation, and thus conserves the redox energy in a proton gradient. This is NAD(P)H-quinone oxidoreductase subunit 6, chloroplastic (ndhG) from Citrus sinensis (Sweet orange).